The following is a 438-amino-acid chain: Probable D-serine dehydratase (438 aa).

Residue Lys114 is modified to N6-(pyridoxal phosphate)lysine.

The protein belongs to the serine/threonine dehydratase family. DsdA subfamily. The cofactor is pyridoxal 5'-phosphate.

It carries out the reaction D-serine = pyruvate + NH4(+). The polypeptide is Probable D-serine dehydratase (Histophilus somni (strain 2336) (Haemophilus somnus)).